A 239-amino-acid polypeptide reads, in one-letter code: Outer membrane protein PagN (239 aa).

A signal peptide spans 1 to 22 (MKNFFAVCIIPLVVAWSATASA). Over 23–26 (KEGI) the chain is Periplasmic. Residues 27–36 (YITGKAGTSV) traverse the membrane as a beta stranded segment. Residues 37–65 (VNVYGINSTFSQDEIVNGHATLPDRTKGV) are Extracellular-facing. A beta stranded transmembrane segment spans residues 66–76 (FGGGVAIGYDF). Over 77–81 (YDPFQ) the chain is Periplasmic. A beta stranded membrane pass occupies residues 82–92 (LPVRLELDTTF). Over 93-120 (RGETDAKGGQDIIAFGDPVHINVKNQVR) the chain is Extracellular. The beta stranded transmembrane segment at 121–132 (MTTYMVNGYYDF) threads the bilayer. Residues 133–137 (HNSTA) are Periplasmic-facing. Residues 138-148 (FTPYISAGVGL) traverse the membrane as a beta stranded segment. Topologically, residues 149-174 (AHVKLSNNTIPVGFGINETLSASKNN) are extracellular. Residues 175–185 (FAWGAGIGAKY) form a beta stranded membrane-spanning segment. Over 186–190 (AVTDN) the chain is Periplasmic. The beta stranded transmembrane segment at 191-200 (IMIDASYKYI) threads the bilayer. At 201–230 (NAGKVSISKNHYAGDEHTAYDADTKAASND) the chain is on the extracellular side. The chain crosses the membrane as a beta stranded span at residues 231-239 (FMLGITYAF).

It localises to the cell outer membrane. Its function is as follows. Haemagglutinin that facilitates the adhesion to and invasion of epithelial mammalian cells. Utilizes heparinated proteoglycan as a receptor to successfully invade host cells. This chain is Outer membrane protein PagN (pagN), found in Salmonella typhimurium (strain LT2 / SGSC1412 / ATCC 700720).